The primary structure comprises 547 residues: DNA ligase (547 aa).

ATP is bound at residue Glu-244. The active-site N6-AMP-lysine intermediate is the Lys-246. Positions 251, 266, 295, 334, 405, and 411 each coordinate ATP.

It belongs to the ATP-dependent DNA ligase family. The cofactor is Mg(2+).

The enzyme catalyses ATP + (deoxyribonucleotide)n-3'-hydroxyl + 5'-phospho-(deoxyribonucleotide)m = (deoxyribonucleotide)n+m + AMP + diphosphate.. Functionally, DNA ligase that seals nicks in double-stranded DNA during DNA replication, DNA recombination and DNA repair. The sequence is that of DNA ligase from Methanospirillum hungatei JF-1 (strain ATCC 27890 / DSM 864 / NBRC 100397 / JF-1).